We begin with the raw amino-acid sequence, 232 residues long: MSVTGPQLLVAMDFNDINDCLALACQLDPQSCRLKIGKELFTTAGPAVVESVQKLGFDVFLDLKFHDIPNTVAGAVKAAANMGVWMVNVHASGGQRMMEAARESLVLFSHKPLLIAVTVLTSMDQSDLNGIGITESPEAMVARLASLAKLSGMDGVVCSALEAGAMKVQQGADFLTITPGIRPASTEAGDQRRVVTPEQAIANGSDFIVVGRPITQAEDPAAACAQIVNSIQ.

Residues Asp-13, Lys-35, Asp-62–Thr-71, Thr-121, Arg-182, Gln-191, Gly-211, and Arg-212 each bind substrate. The Proton donor role is filled by Lys-64.

It belongs to the OMP decarboxylase family. Type 1 subfamily. In terms of assembly, homodimer.

It carries out the reaction orotidine 5'-phosphate + H(+) = UMP + CO2. The protein operates within pyrimidine metabolism; UMP biosynthesis via de novo pathway; UMP from orotate: step 2/2. Functionally, catalyzes the decarboxylation of orotidine 5'-monophosphate (OMP) to uridine 5'-monophosphate (UMP). The protein is Orotidine 5'-phosphate decarboxylase of Teredinibacter turnerae (strain ATCC 39867 / T7901).